Here is a 250-residue protein sequence, read N- to C-terminus: MANQRPIYGFHAVNARLWQNPKSIVELYIQEGKSDARTREVLEKAANENIRVYFADADRLNAISKGARHQGVVGFIDASKNHVHLEDVLENLSEPPLLLILDGITDPHNLGACLRTADAMGVHAVIAPKDKSAGLNATVSKVACGAAETVPYITVTNLARTLRELKEYGIWIIGTDMSGESDLYHCNLPDSAAWVMGNEGDGMRRLTREHCDMLVSIPMFGTVESMNVSVSAGMVLSETRRQRVLKNEKV.

Positions 197, 217, and 226 each coordinate S-adenosyl-L-methionine.

It belongs to the class IV-like SAM-binding methyltransferase superfamily. RNA methyltransferase TrmH family. RlmB subfamily.

The protein localises to the cytoplasm. It carries out the reaction guanosine(2251) in 23S rRNA + S-adenosyl-L-methionine = 2'-O-methylguanosine(2251) in 23S rRNA + S-adenosyl-L-homocysteine + H(+). In terms of biological role, specifically methylates the ribose of guanosine 2251 in 23S rRNA. In Neisseria meningitidis serogroup B (strain ATCC BAA-335 / MC58), this protein is 23S rRNA (guanosine-2'-O-)-methyltransferase RlmB.